A 300-amino-acid chain; its full sequence is tRNA dimethylallyltransferase (300 aa).

11–18 (GPTAVGKS) serves as a coordination point for ATP. Substrate is bound at residue 13–18 (TAVGKS). The interval 35–38 (DSIQ) is interaction with substrate tRNA.

Belongs to the IPP transferase family. Monomer. Mg(2+) is required as a cofactor.

The enzyme catalyses adenosine(37) in tRNA + dimethylallyl diphosphate = N(6)-dimethylallyladenosine(37) in tRNA + diphosphate. Functionally, catalyzes the transfer of a dimethylallyl group onto the adenine at position 37 in tRNAs that read codons beginning with uridine, leading to the formation of N6-(dimethylallyl)adenosine (i(6)A). This is tRNA dimethylallyltransferase from Borreliella afzelii (strain PKo) (Borrelia afzelii).